A 101-amino-acid polypeptide reads, in one-letter code: Large ribosomal subunit protein uL23 (101 aa).

The protein belongs to the universal ribosomal protein uL23 family. As to quaternary structure, part of the 50S ribosomal subunit. Contacts protein L29, and trigger factor when it is bound to the ribosome.

Functionally, one of the early assembly proteins it binds 23S rRNA. One of the proteins that surrounds the polypeptide exit tunnel on the outside of the ribosome. Forms the main docking site for trigger factor binding to the ribosome. The sequence is that of Large ribosomal subunit protein uL23 from Rhodococcus jostii (strain RHA1).